Reading from the N-terminus, the 107-residue chain is Nucleoid-associated protein AZOSEA06390 (107 aa).

Belongs to the YbaB/EbfC family. Homodimer.

The protein localises to the cytoplasm. It is found in the nucleoid. Its function is as follows. Binds to DNA and alters its conformation. May be involved in regulation of gene expression, nucleoid organization and DNA protection. This Aromatoleum aromaticum (strain DSM 19018 / LMG 30748 / EbN1) (Azoarcus sp. (strain EbN1)) protein is Nucleoid-associated protein AZOSEA06390.